The following is a 670-amino-acid chain: tRNA 5-methylaminomethyl-2-thiouridine biosynthesis bifunctional protein MnmC (670 aa).

A tRNA (mnm(5)s(2)U34)-methyltransferase region spans residues 1–242 (MTFSVQHAEI…KRECLSGLKI (242 aa)). Positions 269 to 670 (IGGGIASLCA…KKWLKGSKVE (402 aa)) are FAD-dependent cmnm(5)s(2)U34 oxidoreductase.

The protein in the N-terminal section; belongs to the methyltransferase superfamily. tRNA (mnm(5)s(2)U34)-methyltransferase family. This sequence in the C-terminal section; belongs to the DAO family. The cofactor is FAD.

It is found in the cytoplasm. It catalyses the reaction 5-aminomethyl-2-thiouridine(34) in tRNA + S-adenosyl-L-methionine = 5-methylaminomethyl-2-thiouridine(34) in tRNA + S-adenosyl-L-homocysteine + H(+). Catalyzes the last two steps in the biosynthesis of 5-methylaminomethyl-2-thiouridine (mnm(5)s(2)U) at the wobble position (U34) in tRNA. Catalyzes the FAD-dependent demodification of cmnm(5)s(2)U34 to nm(5)s(2)U34, followed by the transfer of a methyl group from S-adenosyl-L-methionine to nm(5)s(2)U34, to form mnm(5)s(2)U34. The sequence is that of tRNA 5-methylaminomethyl-2-thiouridine biosynthesis bifunctional protein MnmC from Haemophilus influenzae (strain PittEE).